A 557-amino-acid polypeptide reads, in one-letter code: Formate--tetrahydrofolate ligase 2 (557 aa).

Position 66–73 (66–73) interacts with ATP; the sequence is TPAGEGKT.

It belongs to the formate--tetrahydrofolate ligase family.

The catalysed reaction is (6S)-5,6,7,8-tetrahydrofolate + formate + ATP = (6R)-10-formyltetrahydrofolate + ADP + phosphate. It functions in the pathway one-carbon metabolism; tetrahydrofolate interconversion. The protein is Formate--tetrahydrofolate ligase 2 of Streptococcus pyogenes serotype M28 (strain MGAS6180).